The following is a 637-amino-acid chain: ATP-dependent zinc metalloprotease FtsH (637 aa).

At 1-7 (MNRVFRN) the chain is on the cytoplasmic side. The chain crosses the membrane as a helical span at residues 8–28 (TIFYLLILLVVIGVVSYFQTS). The Extracellular segment spans residues 29-109 (NPKTENMSYS…VEPAQETSGW (81 aa)). A helical membrane pass occupies residues 110–130 (VTFLTTIIPFVIIFILFFFLL). The Cytoplasmic portion of the chain corresponds to 131–637 (NQAQGGGSRV…TEEKKDDTKE (507 aa)). 201–208 (GPPGTGKT) provides a ligand contact to ATP. Zn(2+) is bound at residue His-423. Glu-424 is a catalytic residue. Residues His-427 and Asp-499 each coordinate Zn(2+). The segment at 514-637 (FGMSEKLGPL…TEEKKDDTKE (124 aa)) is not necessary for FtsH function.

This sequence in the central section; belongs to the AAA ATPase family. The protein in the C-terminal section; belongs to the peptidase M41 family. In terms of assembly, homohexamer. Interacts with FloT at midcell. Interacts with FloA at midcell. Another study shows only minor colocalization with FloA or FloT. The cofactor is Zn(2+).

The protein resides in the cell membrane. It localises to the membrane raft. Functionally, acts as a processive, ATP-dependent zinc metallopeptidase for both cytoplasmic and membrane proteins. Plays a role in the quality control of integral membrane proteins. In vitro partially degrades Spo0E, the phosphatase that acts on Spo0A-P. Recognition requires the last 14 residues of Spo0E. Its stabile accumulation requires FlotA and Flot. May degrade EzrA. The chain is ATP-dependent zinc metalloprotease FtsH from Bacillus subtilis (strain 168).